The following is a 704-amino-acid chain: UvrABC system protein C (704 aa).

The tract at residues 1–77 is disordered; that stretch reads MIHDPAEPPA…PAQAGAGPMA (77 aa). A compositionally biased stretch (acidic residues) spans 49-66; it reads VEEDDEARLPEVEDEPEA. Positions 67-77 are enriched in low complexity; sequence EPAQAGAGPMA. In terms of domain architecture, GIY-YIG spans 92–170; the sequence is TSPGVYRMLN…IKQLRPRFNV (79 aa). Residues 280 to 315 enclose the UVR domain; it reads RAVKELLAAEMEKASGELEFETAALYRDRLAALSAI.

This sequence belongs to the UvrC family. As to quaternary structure, interacts with UvrB in an incision complex.

It localises to the cytoplasm. Its function is as follows. The UvrABC repair system catalyzes the recognition and processing of DNA lesions. UvrC both incises the 5' and 3' sides of the lesion. The N-terminal half is responsible for the 3' incision and the C-terminal half is responsible for the 5' incision. The protein is UvrABC system protein C of Rhodopseudomonas palustris (strain ATCC BAA-98 / CGA009).